Reading from the N-terminus, the 579-residue chain is ERV-BabFcenv provirus ancestral Env polyprotein (579 aa).

A signal peptide spans methionine 1–isoleucine 22. The surface protein stretch occupies residues isoleucine 23 to glutamine 387. Topologically, residues isoleucine 23–methionine 523 are extracellular. 4 N-linked (GlcNAc...) asparagine glycosylation sites follow: asparagine 135, asparagine 203, asparagine 242, and asparagine 251. The CXXC signature appears at cysteine 255 to cysteine 258. Asparagine 276, asparagine 312, and asparagine 337 each carry an N-linked (GlcNAc...) asparagine glycan. Residues alanine 388–leucine 408 are fusion peptide. The tract at residues alanine 388–proline 579 is transmembrane protein. The short motif at alanine 453–threonine 469 is the CKS-17 element. Cysteine 470 and cysteine 477 are oxidised to a cystine. The short motif at cysteine 470–cysteine 478 is the CX6CC element. Asparagine 482 is a glycosylation site (N-linked (GlcNAc...) asparagine). The helical transmembrane segment at leucine 524 to isoleucine 544 threads the bilayer. Over lysine 545–proline 579 the chain is Cytoplasmic.

Belongs to the gamma type-C retroviral envelope protein family. HERV class-I F(c)1 env subfamily. Post-translationally, specific enzymatic cleavages in vivo yield the mature SU and TM proteins. In terms of processing, the CXXC motif is highly conserved across a broad range of retroviral envelope proteins. It is thought to participate in the formation of a labile disulfide bond possibly with the CX6CC motif present in the transmembrane domain.

The protein resides in the cell membrane. Retroviral envelope proteins mediate receptor recognition and membrane fusion during early infection. Endogenous envelope proteins may have kept, lost or modified their original function during evolution. This chain is ERV-BabFcenv provirus ancestral Env polyprotein, found in Papio anubis (Olive baboon).